A 612-amino-acid chain; its full sequence is Protein tipD (612 aa).

The segment at 95–128 (RNEKKTQQQPPSGSSKMDSSSSSSSSNRVSGMGS) is disordered. Residues 106–128 (SGSSKMDSSSSSSSSNRVSGMGS) are compositionally biased toward low complexity. WD repeat units follow at residues 322-361 (GHNS…QKST), 364-403 (GASQ…SRHT), 406-444 (GHIG…CTRT), 447-486 (CFSS…PTQV), 490-530 (IHEG…TIRT), 535-576 (EYRN…TVKV), and 582-611 (NNGS…IIQW).

It belongs to the WD repeat tipD family.

Not known; disruption of the gene for tipD results in morphological defects. The protein is Protein tipD (tipD) of Dictyostelium discoideum (Social amoeba).